A 213-amino-acid polypeptide reads, in one-letter code: Gas vesicle protein F1 (213 aa).

Belongs to the gas vesicle GvpF/GvpL family. In terms of assembly, binds GvpA1 in early growth stages; is the only one of GvpF1 to GvpM1 that interacts with GvpA1 in H.volcanii experiments. GvpF to GvpM interact with each other in vitro, and may form multi-subunit complex(es). Interacts with GvpC1 and GvpO1.

It is found in the gas vesicle. Its subcellular location is the cytoplasm. Might be involved in preventing aggregation of GvpA1. Proteins GvpF to GvpM might be involved in nucleating gas vesicle formation. A minor component of the gas vesicle, also found in soluble extracts. Gas vesicles are hollow, gas filled proteinaceous nanostructures found in several microbial planktonic microorganisms. They allow positioning of halobacteria at the optimal depth for growth in the poorly aerated, shallow brine pools of their habitat. Its function is as follows. Expression of a 9.5 kb p-vac DNA fragment containing 2 divergently transcribed regions (gvpD-gvpE-gvpF-gvpG-gvpH-gvpI-gvpJ-gvpK-gvpL-gvpM and gvpA-gvpC-gvpN-gvpO) allows H.volcanii to produce gas vesicles. A minimal gas vesicle can be made in H.volcanii by gvpA1-gvpO1 plus gvpF1-gvpG1-gvpJ1-gvpK1-gvpL1-gvpM1; lack of enough GvpJ1 prevents formation. The same region restores gas vesicle production in H.halobium without the p-vac locus. The protein is Gas vesicle protein F1 (gvpF11) of Halobacterium salinarum (strain ATCC 700922 / JCM 11081 / NRC-1) (Halobacterium halobium).